The sequence spans 356 residues: Phosphotriesterase-related protein (356 aa).

H23, H25, E175, H207, H236, and D304 together coordinate a divalent metal cation.

Belongs to the metallo-dependent hydrolases superfamily. Phosphotriesterase family. A divalent metal cation serves as cofactor.

This is Phosphotriesterase-related protein from Aedes aegypti (Yellowfever mosquito).